Consider the following 591-residue polypeptide: Formate--tetrahydrofolate ligase (591 aa).

An ATP-binding site is contributed by 74 to 81 (TPLGEGKS).

This sequence belongs to the formate--tetrahydrofolate ligase family.

The enzyme catalyses (6S)-5,6,7,8-tetrahydrofolate + formate + ATP = (6R)-10-formyltetrahydrofolate + ADP + phosphate. Its pathway is one-carbon metabolism; tetrahydrofolate interconversion. In Desulfovibrio desulfuricans (strain ATCC 27774 / DSM 6949 / MB), this protein is Formate--tetrahydrofolate ligase.